We begin with the raw amino-acid sequence, 357 residues long: Alanine racemase (357 aa).

The Proton acceptor; specific for D-alanine role is filled by K35. Position 35 is an N6-(pyridoxal phosphate)lysine (K35). R130 is a substrate binding site. Y253 acts as the Proton acceptor; specific for L-alanine in catalysis. M302 contacts substrate.

This sequence belongs to the alanine racemase family. Pyridoxal 5'-phosphate is required as a cofactor.

The enzyme catalyses L-alanine = D-alanine. It participates in amino-acid biosynthesis; D-alanine biosynthesis; D-alanine from L-alanine: step 1/1. Functionally, catalyzes the interconversion of L-alanine and D-alanine. May also act on other amino acids. This Wigglesworthia glossinidia brevipalpis protein is Alanine racemase (alr).